A 338-amino-acid chain; its full sequence is Cytochrome P450 monooxygenase easK (338 aa).

Positions 1-16 (MLLLTFTLPVVTLLLA) are cleaved as a signal peptide. 2 N-linked (GlcNAc...) asparagine glycosylation sites follow: N240 and N327.

This sequence belongs to the cytochrome P450 family. The cofactor is heme.

Its pathway is alkaloid biosynthesis; ergot alkaloid biosynthesis. Functionally, cytochrome P450 monooxygenase; part of the gene cluster that mediates the biosynthesis of fumiclavanine C, a fungal ergot alkaloid. DmaW catalyzes the first step of ergot alkaloid biosynthesis by condensing dimethylallyl diphosphate (DMAP) and tryptophan to form 4-dimethylallyl-L-tryptophan. The second step is catalyzed by the methyltransferase easF that methylates 4-dimethylallyl-L-tryptophan in the presence of S-adenosyl-L-methionine, resulting in the formation of 4-dimethylallyl-L-abrine. The catalase easC and the FAD-dependent oxidoreductase easE then transform 4-dimethylallyl-L-abrine to chanoclavine-I which is further oxidized by EasD in the presence of NAD(+), resulting in the formation of chanoclavine-I aldehyde. EasA reduces chanoclavine-I aldehyde to dihydrochanoclavine-I aldehyde that spontaneously dehydrates to form 6,8-dimethyl-6,7-didehydroergoline. EasG then catalyzes the reduction of 6,8-dimethyl-6,7-didehydroergoline to form festuclavine. Hydrolysis of festuclavine by easM then leads to the formation of fumigaclavine B which is in turn acetylated by easN to fumigaclavine A. Finally, easL catalyzes the conversion of fumigaclavine A into fumigaclavine C by attaching a dimethylallyl moiety to C-2 of the indole nucleus. The role of the cytochrome P450 monooxygenase easK within the cluster has not been identified yet. This chain is Cytochrome P450 monooxygenase easK, found in Aspergillus fumigatus (strain ATCC MYA-4609 / CBS 101355 / FGSC A1100 / Af293) (Neosartorya fumigata).